Here is a 360-residue protein sequence, read N- to C-terminus: Sorbitol dehydrogenase (360 aa).

Zn(2+) is bound at residue cysteine 42. Tyrosine 48 contributes to the substrate binding site. Histidine 67 and glutamate 68 together coordinate Zn(2+). Glutamate 153 is a substrate binding site. Residues aspartate 201, arginine 206, 277 to 279 (AGN), and 301 to 303 (SFR) contribute to the NAD(+) site. Substrate-binding residues include arginine 303 and tyrosine 304.

The protein belongs to the zinc-containing alcohol dehydrogenase family. Homotetramer. It depends on Zn(2+) as a cofactor.

The catalysed reaction is keto-D-fructose + NADH + H(+) = D-sorbitol + NAD(+). Polyol dehydrogenase that catalyzes the reversible NAD(+)-dependent oxidation of various sugar alcohols. Is active with D-sorbitol (D-glucitol) as substrate, leading to the C2-oxidized product D-fructose. Suppresses growth arrest induced by a p53 tumor mutant in fission yeast. The polypeptide is Sorbitol dehydrogenase (tms1) (Schizosaccharomyces pombe (strain 972 / ATCC 24843) (Fission yeast)).